A 177-amino-acid chain; its full sequence is Trafficking regulator of GLUT4 1 (177 aa).

The Cytoplasmic segment spans residues methionine 1 to leucine 105. Serine 48, serine 87, and serine 88 each carry phosphoserine. Residues glutamate 71–threonine 92 form a disordered region. Over residues alanine 72–serine 88 the composition is skewed to low complexity. Positions isoleucine 106–isoleucine 126 form an intramembrane region, helical. Over serine 127–serine 153 the chain is Cytoplasmic. Residues isoleucine 154–valine 174 traverse the membrane as a helical segment. The Extracellular segment spans residues glutamine 175–lysine 177.

Belongs to the CD225/Dispanin family. In terms of assembly, interacts with SLC2A4; the interaction is required for proper SLC2A4 reacycling after insulin stimulation. Expressed at high levels in heart, mammary gland, adrenal gland, stomach, smooth muscle and skeletal muscle, and at lower levels in brain and lung. Strongly down-regulated in lung cancer tissues, due to hypermethylation of the corresponding locus. Expressed in adipose tissue.

It is found in the cell membrane. The protein resides in the endomembrane system. The protein localises to the cytoplasm. Its subcellular location is the perinuclear region. Functionally, regulates insulin-mediated adipose tissue glucose uptake and transport by modulation of SLC2A4 recycling. Not required for SLC2A4 membrane fusion upon an initial stimulus, but rather is necessary for proper protein recycling during prolonged insulin stimulation. In Homo sapiens (Human), this protein is Trafficking regulator of GLUT4 1.